The primary structure comprises 388 residues: Deoxyguanosinetriphosphate triphosphohydrolase-like protein (388 aa).

The segment at 24–44 (HSAQTRGRVHAEPPSTSRTEF) is disordered. The 132-residue stretch at 78-209 (RLTHSLEVAQ…ANLADEVAYN (132 aa)) folds into the HD domain.

This sequence belongs to the dGTPase family. Type 2 subfamily.

The protein is Deoxyguanosinetriphosphate triphosphohydrolase-like protein of Ralstonia pickettii (strain 12J).